The primary structure comprises 21 residues: Peptide PGLa-R4 (21 aa).

Residue Leu21 is modified to Leucine amide.

Expressed by the skin glands.

The protein localises to the secreted. Antimicrobial peptide. The chain is Peptide PGLa-R4 from Xenopus ruwenzoriensis (Uganda clawed frog).